Consider the following 590-residue polypeptide: Pentatricopeptide repeat-containing protein At1g63070, mitochondrial (590 aa).

The N-terminal 34 residues, 1–34 (MMRSVAVIGKKCLHRHTVLLKGNPRTTLCWERSF), are a transit peptide targeting the mitochondrion. PPR repeat units follow at residues 74–108 (SIVE…GISH), 109–143 (NLYT…GYGP), 144–178 (SIVT…GYQP), 179–213 (DTVT…GCQP), 214–248 (DLVT…KIEA), 249–283 (DVVI…GIKP), 284–318 (DVFT…NINP), 319–353 (DLVF…KHCF), 355–389 (DVVA…GLVG), 390–424 (NTVT…GVHP), 425–459 (DIMT…DMKL), 460–494 (DIVT…GVKP), 495–529 (NVVT…GPLP), and 530–564 (NSGT…GFAG).

This sequence belongs to the PPR family. P subfamily.

It is found in the mitochondrion. The protein is Pentatricopeptide repeat-containing protein At1g63070, mitochondrial of Arabidopsis thaliana (Mouse-ear cress).